A 411-amino-acid chain; its full sequence is MKMVLSQRQREELNQAIADYLGSNGYADSLETFRKEADLSTESEKKYGGLLEKKWTSVIRLQKKVMDLEAKLTEAEKEVIEGAPTKNKRTPGEWIPRPPEKYSLTGHRASITRVIFHPIFGLMVSASEDATIKIWDFETGEYERSLKGHTDSVQDVAFDAQGKLLASCSADLSIKLWDFQQSYECVKTMHGHDHNVSSVAFVPAGDYVLSASRDRTIKMWEVATGYCVKTYTGHREWVRMVRVHIEGSIFATCSNDHTIRVWLTNSKDCKVELRDHEHTVECIAWAPEAAASAINEAAGADNKKGHHQGPFLASGSRDKTIRIWDVSVGLCLLTLNGHDNWVRGLAFHPGGKYLVSASDDKTIRVWDLRNKRCMKTLYAHQHFCTSIDFHKAHPYVISGSVDQSVKVWECR.

Positions Gln9–Thr41 constitute a LisH domain. Residues Thr56 to Ala83 are a coiled coil. WD repeat units follow at residues Gly106–Lys147, Gly148–Lys187, Gly191–Thr230, Gly233–Glu272, Asp275–Thr334, Gly337–Thr376, and Ala379–Arg411.

This sequence belongs to the WD repeat LIS1/nudF family.

The protein resides in the cytoplasm. The protein localises to the cytoskeleton. Its subcellular location is the microtubule organizing center. It is found in the centrosome. Its function is as follows. Positively regulates the activity of the minus-end directed microtubule motor protein dynein. May enhance dynein-mediated microtubule sliding by targeting dynein to the microtubule plus end. Required for several dynein- and microtubule-dependent processes. The sequence is that of Lissencephaly-1 homolog from Drosophila mojavensis (Fruit fly).